The primary structure comprises 641 residues: Serine/threonine-protein kinase PK-1 (641 aa).

Residues 18–280 (YRVDARIAVG…ARARDARARL (263 aa)) enclose the Protein kinase domain. Residues 24-32 (IAVGGMATV) and K47 each bind ATP. The active-site Proton acceptor is the D141. A disordered region spans residues 317 to 347 (LPVNEEDEGADAAHRTSRFRSPPPLPPRGRT). 4 consecutive PASTA domains span residues 375-441 (SGQF…TLSK), 442-508 (GPRT…LTVS), 509-576 (KGAP…TLSK), and 577-641 (GPEM…IEIR). The segment at 469–494 (KPGMSTREFSDSVPAGSVISTEPGKG) is disordered.

The protein belongs to the protein kinase superfamily. Ser/Thr protein kinase family. Post-translationally, autophosphorylated on threonine residue(s).

The enzyme catalyses L-seryl-[protein] + ATP = O-phospho-L-seryl-[protein] + ADP + H(+). It catalyses the reaction L-threonyl-[protein] + ATP = O-phospho-L-threonyl-[protein] + ADP + H(+). This is Serine/threonine-protein kinase PK-1 (spk1) from Streptomyces toyocaensis.